The primary structure comprises 319 residues: ATP-dependent 6-phosphofructokinase (319 aa).

Residue Gly-11 coordinates ATP. 21-25 (RAVVR) serves as a coordination point for ADP. Residues 72 to 73 (RC) and 102 to 105 (GDGS) each bind ATP. Residue Asp-103 participates in Mg(2+) binding. 125–127 (TID) is a substrate binding site. Residue Asp-127 is the Proton acceptor of the active site. ADP is bound at residue Arg-154. Substrate is bound by residues Arg-162 and 169–171 (MGR). Residues 185–187 (GAE), Lys-211, and 213–215 (KMH) each bind ADP. Substrate-binding positions include Glu-222, Arg-243, and 249–252 (HIQR).

It belongs to the phosphofructokinase type A (PFKA) family. ATP-dependent PFK group I subfamily. Prokaryotic clade 'B1' sub-subfamily. In terms of assembly, homotetramer. Requires Mg(2+) as cofactor.

The protein resides in the cytoplasm. The enzyme catalyses beta-D-fructose 6-phosphate + ATP = beta-D-fructose 1,6-bisphosphate + ADP + H(+). It functions in the pathway carbohydrate degradation; glycolysis; D-glyceraldehyde 3-phosphate and glycerone phosphate from D-glucose: step 3/4. Allosterically activated by ADP and other diphosphonucleosides, and allosterically inhibited by phosphoenolpyruvate. Catalyzes the phosphorylation of D-fructose 6-phosphate to fructose 1,6-bisphosphate by ATP, the first committing step of glycolysis. The chain is ATP-dependent 6-phosphofructokinase from Clostridium botulinum (strain 657 / Type Ba4).